Reading from the N-terminus, the 2925-residue chain is TPR and ankyrin repeat-containing protein 1 (2925 aa).

TPR repeat units follow at residues 15–48 (AVLLCNKSNAFFSLGKWNEAFVAAKECLQWDPTY) and 50–82 (KGYYRAGYSLLRLHQPYEAARMFFEGLRLVQRS). 6 ANK repeats span residues 168–198 (EKYVFIGLYEKMEQVPKLVQWLISIGASVET), 203–232 (PLHALMRLCIQARENHLFRWLMDHKPEWKG), 240–276 (DGCTVLHVVAAHSPGYLVKRQTEDVQMLLRFGADPTL), 463–492 (SQERPVVTCLKHEDFELAFLLLTKGADPRA), 497–518 (EGDTPLHAALHIFLEIKADIGF), and 546–575 (NGNTLMHILFQKGMLKRVKKLLDLLVKFDI). Disordered regions lie at residues 612-669 (SRQD…LPGT), 706-741 (PEDCLQSSEPLEAGAGKEGKKDDKPTLGAGAPDCSE), and 1077-1103 (VEPGKESPGGEEEEEEEDEEEEDSIEV). A compositionally biased stretch (polar residues) spans 624–641 (SKSTAPGHTSQLKSQGSF). Basic and acidic residues predominate over residues 720-730 (AGKEGKKDDKP). Positions 1085-1103 (GGEEEEEEEDEEEEDSIEV) are enriched in acidic residues. TPR repeat units lie at residues 1699–1732 (PAEWIAQGDYYAKHQCWKVAAKCYQKGGAFEKEK) and 1793–1826 (LGKIRDAAYFYKRSQCYKDAFRCFEQIQEFDLAL). The stretch at 2301–2330 (EEFEKLLHQEEDNYNRELKALESEKDERGR) forms a coiled coil.

The sequence is that of TPR and ankyrin repeat-containing protein 1 (TRANK1) from Homo sapiens (Human).